A 392-amino-acid chain; its full sequence is Formate-dependent phosphoribosylglycinamide formyltransferase (392 aa).

Residues 22–23 (EL) and E82 each bind N(1)-(5-phospho-beta-D-ribosyl)glycinamide. Residues R114, K155, 160-165 (SSGKGQ), 195-198 (EGVV), and E203 each bind ATP. The 190-residue stretch at 119–308 (RLAAEELQLP…EFALHVRAFL (190 aa)) folds into the ATP-grasp domain. Residues E267 and E279 each coordinate Mg(2+). N(1)-(5-phospho-beta-D-ribosyl)glycinamide is bound by residues D286, K355, and 362–363 (RR).

The protein belongs to the PurK/PurT family. As to quaternary structure, homodimer.

The catalysed reaction is N(1)-(5-phospho-beta-D-ribosyl)glycinamide + formate + ATP = N(2)-formyl-N(1)-(5-phospho-beta-D-ribosyl)glycinamide + ADP + phosphate + H(+). It participates in purine metabolism; IMP biosynthesis via de novo pathway; N(2)-formyl-N(1)-(5-phospho-D-ribosyl)glycinamide from N(1)-(5-phospho-D-ribosyl)glycinamide (formate route): step 1/1. Its function is as follows. Involved in the de novo purine biosynthesis. Catalyzes the transfer of formate to 5-phospho-ribosyl-glycinamide (GAR), producing 5-phospho-ribosyl-N-formylglycinamide (FGAR). Formate is provided by PurU via hydrolysis of 10-formyl-tetrahydrofolate. In Shigella flexneri, this protein is Formate-dependent phosphoribosylglycinamide formyltransferase.